The sequence spans 94 residues: Co-chaperonin GroES (94 aa).

The protein belongs to the GroES chaperonin family. Heptamer of 7 subunits arranged in a ring. Interacts with the chaperonin GroEL.

It localises to the cytoplasm. Its function is as follows. Together with the chaperonin GroEL, plays an essential role in assisting protein folding. The GroEL-GroES system forms a nano-cage that allows encapsulation of the non-native substrate proteins and provides a physical environment optimized to promote and accelerate protein folding. GroES binds to the apical surface of the GroEL ring, thereby capping the opening of the GroEL channel. The chain is Co-chaperonin GroES from Staphylococcus epidermidis (strain ATCC 35984 / DSM 28319 / BCRC 17069 / CCUG 31568 / BM 3577 / RP62A).